The sequence spans 502 residues: Neuronal acetylcholine receptor subunit alpha-7 (502 aa).

The signal sequence occupies residues 1–22 (MRCSPGGVWLALAASLLHVSLQ). Topologically, residues 23-233 (GEFQRKLYKE…VTMRRRTLYY (211 aa)) are extracellular. 2 residues coordinate Ca(2+): R42 and V44. N-linked (GlcNAc...) asparagine glycosylation is found at N46, N90, and N133. C150 and C164 are joined by a disulfide. Residues S172 and Y210 each contribute to the Ca(2+) site. A disulfide bridge links C212 with C213. 3 helical membrane passes run 234–254 (GLNL…VFLL), 259–279 (GEKI…MLLV), and 292–315 (LIAQ…VIVL). Residues 260–267 (EKISLGIT) form an essential for TMEM35A/NACHO-mediated proper subunit assembly and trafficking to cell membrane region. The Cytoplasmic portion of the chain corresponds to 316 to 466 (QYHHHDPDGG…CSEWKFAACV (151 aa)). A helical membrane pass occupies residues 467–489 (VDRLCLMAFSVFTIICTIGILMS).

It belongs to the ligand-gated ion channel (TC 1.A.9) family. Acetylcholine receptor (TC 1.A.9.1) subfamily. Alpha-7/CHRNA7 sub-subfamily. In terms of assembly, homopentamer. Can also form heteropentamers with CHRNB2, mainly found in basal forebrain cholinergic neurons. Interacts with RIC3; which is required for proper folding and assembly. Interacts with LYPD6. Interacts with CANX. In terms of processing, glycosylations at Asn-46, Asn-90 and Asn-133 are essential for TMEM35A/NACHO-mediated proper subunit assembly and trafficking to the cell membrane. As to expression, expressed in neuronal cells. Expressed in macrophages (at protein level).

Its subcellular location is the postsynaptic cell membrane. It localises to the cell membrane. The catalysed reaction is Ca(2+)(in) = Ca(2+)(out). It catalyses the reaction K(+)(in) = K(+)(out). It carries out the reaction Na(+)(in) = Na(+)(out). The enzyme catalyses choline(out) = choline(in). The catalysed reaction is NH4(+)(in) = NH4(+)(out). It catalyses the reaction L-arginine(in) = L-arginine(out). It carries out the reaction guanidine(out) = guanidine(in). Activated by a myriad of ligands such as acetylcholine, cytisine, nicotine, choline and epibatidine. Oligomeric amyloid-beta protein 42 activates specifially CHRNA7:CHRNB2 nAchRs. Activity is modulated by positive allosteric modulators (PAMs), such as flavonoids, with a wide range of chemical diversity, pharmacological sensitivity and efficacy. AChR activity is inhibited by the antagonists alpha-conotoxons RgIA, ImI and ImII, small disulfide-constrained peptides from cone snails. Alpha-conotoxin PnIC selectively inhibits CHRNA7:CHRNB2 over CHRNA7 homopentamer. In terms of biological role, component of neuronal acetylcholine receptors (nAChRs) that function as pentameric, ligand-gated cation channels with high calcium permeability among other activities. nAChRs are excitatory neurotrasnmitter receptors formed by a collection of nAChR subunits known to mediate synaptic transmission in the nervous system and the neuromuscular junction. Each nAchR subunit confers differential attributes to channel properties, including activation, deactivation and desensitization kinetics, pH sensitivity, cation permeability, and binding to allosteric modulators. CHRNA7 forms homopentameric neuronal acetylcholine receptors abundantly expressed in the central nervous system, characterized by fast desensitization and high calcium permeability. Also forms heteropentamers with CHRNB2, mainly expressed in basal forebrain cholinergic neurons. Involved in the modulation of calcium-dependent signaling pathways and influences the release of neurotransmitters, including dopamine, glutamate and GABA. Also expressed in non-neuronal cells such as immune cells like lymphocytes, monocytes and macrophages. In T cells, activation induces metabotropic signaling that results in an increase of intracellular Ca2+ concentrations, independent of ionotropic receptor functions. In macrophages, required for acetylcholine-mediated inhibition of TNF and other inflammatory cytokine release. Once activated by acetylcholine, nicotine or other agonists, selectively inhibits production of pro-inflammatory cytokines while leaving anti-inflammatory cytokines undisturbed. Stimulates the cholinergic anti-inflammatory pathway, controlling inflammation by inhibiting NFKB nuclear translocation and activating the JAK2-STAT3 pathway, independently of ion channel activity. Also expressed in the urothelium where it modulates reflex bladder activity by increasing intracellular calcium through internal stores and decreasing basal ATP release. The protein is Neuronal acetylcholine receptor subunit alpha-7 of Homo sapiens (Human).